A 610-amino-acid chain; its full sequence is Elongation factor 4 (610 aa).

One can recognise a tr-type G domain in the interval 11 to 193 (QRIRNFSIVA…KIVQDIPAPT (183 aa)). GTP contacts are provided by residues 23–28 (DHGKST) and 140–143 (NKVD).

This sequence belongs to the TRAFAC class translation factor GTPase superfamily. Classic translation factor GTPase family. LepA subfamily.

The protein resides in the cell membrane. The catalysed reaction is GTP + H2O = GDP + phosphate + H(+). Its function is as follows. Required for accurate and efficient protein synthesis under certain stress conditions. May act as a fidelity factor of the translation reaction, by catalyzing a one-codon backward translocation of tRNAs on improperly translocated ribosomes. Back-translocation proceeds from a post-translocation (POST) complex to a pre-translocation (PRE) complex, thus giving elongation factor G a second chance to translocate the tRNAs correctly. Binds to ribosomes in a GTP-dependent manner. This chain is Elongation factor 4, found in Limosilactobacillus fermentum (strain NBRC 3956 / LMG 18251) (Lactobacillus fermentum).